The primary structure comprises 481 residues: GTPase Der (481 aa).

EngA-type G domains lie at 3-166 (PVVA…ESDF) and 194-367 (IKLA…MSAT). Residues 9 to 16 (GRPNVGKS), 56 to 60 (DTGGI), 118 to 121 (NKVD), 200 to 207 (GKPNVGKS), 247 to 251 (DTAGV), and 312 to 315 (NKWD) each bind GTP. The KH-like domain occupies 368–452 (KRINTALLTQ…PIKIEFREGN (85 aa)).

It belongs to the TRAFAC class TrmE-Era-EngA-EngB-Septin-like GTPase superfamily. EngA (Der) GTPase family. As to quaternary structure, associates with the 50S ribosomal subunit.

Its function is as follows. GTPase that plays an essential role in the late steps of ribosome biogenesis. This is GTPase Der from Alteromonas mediterranea (strain DSM 17117 / CIP 110805 / LMG 28347 / Deep ecotype).